The chain runs to 129 residues: MSVPAELKYTESHEWVRLEADGSVTVGITQHAQELLGDMVFVQLPDVGRALAQREDCAVVESVKAASDIYAPLGGEVIAVNSEVETSPEKINEDCYAAWLFKLKPANAGEVDGLLDAGGYQKLLDSEAH.

Residues 23–104 enclose the Lipoyl-binding domain; that stretch reads SVTVGITQHA…CYAAWLFKLK (82 aa). N6-lipoyllysine is present on lysine 64.

Belongs to the GcvH family. In terms of assembly, the glycine cleavage system is composed of four proteins: P, T, L and H. The cofactor is (R)-lipoate.

The glycine cleavage system catalyzes the degradation of glycine. The H protein shuttles the methylamine group of glycine from the P protein to the T protein. In Nitrosomonas europaea (strain ATCC 19718 / CIP 103999 / KCTC 2705 / NBRC 14298), this protein is Glycine cleavage system H protein.